The sequence spans 410 residues: 2,3-bisphosphoglycerate-independent phosphoglycerate mutase (410 aa).

The protein belongs to the BPG-independent phosphoglycerate mutase family. A-PGAM subfamily.

It carries out the reaction (2R)-2-phosphoglycerate = (2R)-3-phosphoglycerate. The protein operates within carbohydrate degradation; glycolysis; pyruvate from D-glyceraldehyde 3-phosphate: step 3/5. In terms of biological role, catalyzes the interconversion of 2-phosphoglycerate and 3-phosphoglycerate. The chain is 2,3-bisphosphoglycerate-independent phosphoglycerate mutase from Pyrococcus abyssi (strain GE5 / Orsay).